We begin with the raw amino-acid sequence, 275 residues long: Large ribosomal subunit protein uL2 (275 aa).

The disordered stretch occupies residues 224–275; sequence AMNPVDHPHGGGEGKAPIGHPGPLTPWGKPALGYKTRKKGKASDKFIIRRRK. The segment covering 264–275 has biased composition (basic and acidic residues); it reads KASDKFIIRRRK.

This sequence belongs to the universal ribosomal protein uL2 family. In terms of assembly, part of the 50S ribosomal subunit. Forms a bridge to the 30S subunit in the 70S ribosome.

Functionally, one of the primary rRNA binding proteins. Required for association of the 30S and 50S subunits to form the 70S ribosome, for tRNA binding and peptide bond formation. It has been suggested to have peptidyltransferase activity; this is somewhat controversial. Makes several contacts with the 16S rRNA in the 70S ribosome. This is Large ribosomal subunit protein uL2 from Thermoanaerobacter pseudethanolicus (strain ATCC 33223 / 39E) (Clostridium thermohydrosulfuricum).